The chain runs to 357 residues: Cholinesterase 1 (357 aa).

Residue Ser-112 is the Acyl-ester intermediate of the active site. Cys-166 and Cys-179 are oxidised to a cystine. Residues Glu-244 and His-357 each act as charge relay system in the active site.

It belongs to the type-B carboxylesterase/lipase family.

The enzyme catalyses an acylcholine + H2O = a carboxylate + choline + H(+). The protein is Cholinesterase 1 (CHE1) of Branchiostoma lanceolatum (Common lancelet).